A 447-amino-acid polypeptide reads, in one-letter code: Na(+)-translocating NADH-quinone reductase subunit A (447 aa).

The protein belongs to the NqrA family. In terms of assembly, composed of six subunits; NqrA, NqrB, NqrC, NqrD, NqrE and NqrF.

It carries out the reaction a ubiquinone + n Na(+)(in) + NADH + H(+) = a ubiquinol + n Na(+)(out) + NAD(+). In terms of biological role, NQR complex catalyzes the reduction of ubiquinone-1 to ubiquinol by two successive reactions, coupled with the transport of Na(+) ions from the cytoplasm to the periplasm. NqrA to NqrE are probably involved in the second step, the conversion of ubisemiquinone to ubiquinol. In Neisseria meningitidis serogroup A / serotype 4A (strain DSM 15465 / Z2491), this protein is Na(+)-translocating NADH-quinone reductase subunit A.